A 598-amino-acid polypeptide reads, in one-letter code: Aspartate--tRNA(Asp/Asn) ligase (598 aa).

Glutamate 174 contacts L-aspartate. Residues 198–201 (QQLK) are aspartate. Position 220 (arginine 220) interacts with L-aspartate. ATP-binding positions include 220-222 (RDE) and glutamine 229. Histidine 458 provides a ligand contact to L-aspartate. Residue glutamate 492 coordinates ATP. Arginine 499 provides a ligand contact to L-aspartate. An ATP-binding site is contributed by 544–547 (GIDR).

It belongs to the class-II aminoacyl-tRNA synthetase family. Type 1 subfamily. As to quaternary structure, homodimer.

Its subcellular location is the cytoplasm. It carries out the reaction tRNA(Asx) + L-aspartate + ATP = L-aspartyl-tRNA(Asx) + AMP + diphosphate. Functionally, aspartyl-tRNA synthetase with relaxed tRNA specificity since it is able to aspartylate not only its cognate tRNA(Asp) but also tRNA(Asn). Reaction proceeds in two steps: L-aspartate is first activated by ATP to form Asp-AMP and then transferred to the acceptor end of tRNA(Asp/Asn). This is Aspartate--tRNA(Asp/Asn) ligase from Dehalococcoides mccartyi (strain ATCC BAA-2100 / JCM 16839 / KCTC 5957 / BAV1).